A 307-amino-acid polypeptide reads, in one-letter code: Zinc-alpha-2-glycoprotein (307 aa).

The first 17 residues, 1–17, serve as a signal peptide directing secretion; that stretch reads MVPVLLSLPLLLGPAVF. Q18 is subject to Pyrrolidone carboxylic acid. C118 and C181 are oxidised to a cystine. N-linked (GlcNAc...) asparagine glycans are attached at residues N123, N190, and N254. An Ig-like C1-type domain is found at 202-287; the sequence is PTVTITSRVI…DHRGFSQSLS (86 aa). C220 and C275 are disulfide-bonded.

This sequence belongs to the MHC class I family. In terms of assembly, interacts with PIP.

It is found in the secreted. Functionally, stimulates lipid degradation in adipocytes and causes the extensive fat losses associated with some advanced cancers. This Mus musculus (Mouse) protein is Zinc-alpha-2-glycoprotein (Azgp1).